Consider the following 190-residue polypeptide: MFNIVTRFQYAANQALTSSIIIAGIVIVSSLLQLYSNNAWSLGTTSISNIKPQVSLKHSFNYGSVNRKPKENSRIQFDLETDLSPLFNWNTKQLFVYLTAEYPGKSDGSSNKITYWDKIITSKEDAVLSLKNQKSKYSVWDIEPSFRQRDAVVKLEWNLQPHIGPLIFGETDEIADFKFAEYVDKKKEQK.

Residues 1-9 (MFNIVTRFQ) lie on the Cytoplasmic side of the membrane. Residues 10-32 (YAANQALTSSIIIAGIVIVSSLL) traverse the membrane as a helical; Signal-anchor for type II membrane protein segment. Residues 33–190 (QLYSNNAWSL…EYVDKKKEQK (158 aa)) lie on the Lumenal side of the membrane.

It belongs to the SPCS3 family. As to quaternary structure, component of the signal peptidase complex (SPC) composed of a catalytic subunit SEC11 and three accessory subunits SPC1, SPC2 and SPC3. The complex induces a local thinning of the ER membrane which is used to measure the length of the signal peptide (SP) h-region of protein substrates. This ensures the selectivity of the complex towards h-regions shorter than 18-20 amino acids. SPC associates with the translocon complex.

The protein resides in the endoplasmic reticulum membrane. Functionally, essential component of the signal peptidase complex (SPC) which catalyzes the cleavage of N-terminal signal sequences from nascent proteins as they are translocated into the lumen of the endoplasmic reticulum. Essential for the SPC catalytic activity, possibly by stabilizing and positioning the active center of the complex close to the lumenal surface. Essential for viability. This chain is Signal peptidase complex subunit 3 (SPC3), found in Debaryomyces hansenii (strain ATCC 36239 / CBS 767 / BCRC 21394 / JCM 1990 / NBRC 0083 / IGC 2968) (Yeast).